The primary structure comprises 359 residues: Glutamine synthetase (359 aa).

The region spanning 28–107 is the GS beta-grasp domain; the sequence is VMAEYIWIDG…VLAACYTADG (80 aa). Residues 114 to 359 enclose the GS catalytic domain; it reads HRDACAKLLE…GIITETMFEH (246 aa). Serine 273 carries the post-translational modification Phosphoserine. Phosphothreonine is present on threonine 303. Serine 305 is subject to Phosphoserine.

Belongs to the glutamine synthetase family. Homooctamer.

The protein resides in the cytoplasm. The enzyme catalyses L-glutamate + NH4(+) + ATP = L-glutamine + ADP + phosphate + H(+). The protein is Glutamine synthetase (gln1) of Schizosaccharomyces pombe (strain 972 / ATCC 24843) (Fission yeast).